Reading from the N-terminus, the 36-residue chain is Pancreatic polypeptide (36 aa).

Position 36 is a tyrosine amide (Tyr36).

This sequence belongs to the NPY family.

It localises to the secreted. Hormone secreted by pancreatic cells that acts as a regulator of pancreatic and gastrointestinal functions probably by signaling through the G protein-coupled receptor NPY4R2. This Tapirus pinchaque (Mountain tapir) protein is Pancreatic polypeptide (PPY).